The following is a 141-amino-acid chain: Organic hydroperoxide resistance protein OhrA (141 aa).

This sequence belongs to the OsmC/Ohr family.

Involved in organic hydroperoxide resistance. This chain is Organic hydroperoxide resistance protein OhrA (ohrA), found in Bacillus subtilis (strain 168).